The chain runs to 350 residues: tRNA uridine(34) hydroxylase (350 aa).

The Rhodanese domain occupies 146 to 240 (DDPDAVFIDM…YARKAREQGL (95 aa)). Cys200 functions as the Cysteine persulfide intermediate in the catalytic mechanism. Positions 314-350 (PEEEQRRRRAGRENGNKIFNKSRGRLNTQLGIPDPAE) are disordered. Over residues 316-328 (EEQRRRRAGRENG) the composition is skewed to basic and acidic residues.

It belongs to the TrhO family.

It carries out the reaction uridine(34) in tRNA + AH2 + O2 = 5-hydroxyuridine(34) in tRNA + A + H2O. Catalyzes oxygen-dependent 5-hydroxyuridine (ho5U) modification at position 34 in tRNAs. In Citrobacter koseri (strain ATCC BAA-895 / CDC 4225-83 / SGSC4696), this protein is tRNA uridine(34) hydroxylase.